Reading from the N-terminus, the 219-residue chain is Interleukin-12 subunit alpha (219 aa).

The signal sequence occupies residues 1–22 (MCPARSLLLVATLVLLDYLSLA). N-linked (GlcNAc...) asparagine glycans are attached at residues Asn-24, Asn-93, and Asn-107. Cystine bridges form between Cys-37-Cys-110, Cys-64-Cys-196, and Cys-85-Cys-123.

The protein belongs to the IL-6 superfamily. In terms of assembly, heterodimer with IL12B; disulfide-linked. This heterodimer is known as interleukin IL-12. Heterodimer with EBI3/IL27B; not disulfide-linked. This heterodimer is known as interleukin IL-35. Interacts with NBR1; this interaction promotes IL-12 secretion.

Its subcellular location is the secreted. Its function is as follows. Heterodimerizes with IL12B to form the IL-12 cytokine or with EBI3/IL27B to form the IL-35 cytokine. IL-12 is primarily produced by professional antigen-presenting cells (APCs) such as B-cells and dendritic cells (DCs) as well as macrophages and granulocytes and regulates T-cell and natural killer-cell responses, induces the production of interferon-gamma (IFN-gamma), favors the differentiation of T-helper 1 (Th1) cells and is an important link between innate resistance and adaptive immunity. Mechanistically, exerts its biological effects through a receptor composed of IL12R1 and IL12R2 subunits. Binding to the receptor results in the rapid tyrosine phosphorylation of a number of cellular substrates including the JAK family kinases TYK2 and JAK2. In turn, recruited STAT4 gets phosphorylated and translocates to the nucleus where it regulates cytokine/growth factor responsive genes. As part of IL-35, plays essential roles in maintaining the immune homeostasis of the liver microenvironment and also functions as an immune-suppressive cytokine. Mediates biological events through unconventional receptors composed of IL12RB2 and gp130/IL6ST heterodimers or homodimers. Signaling requires the transcription factors STAT1 and STAT4, which form a unique heterodimer that binds to distinct DNA sites. The chain is Interleukin-12 subunit alpha (IL12A) from Cercocebus atys (Sooty mangabey).